Reading from the N-terminus, the 356-residue chain is Alanine racemase, catabolic (356 aa).

The active-site Proton acceptor; specific for D-alanine is the lysine 35. Lysine 35 carries the N6-(pyridoxal phosphate)lysine modification. Arginine 130 lines the substrate pocket. Tyrosine 253 serves as the catalytic Proton acceptor; specific for L-alanine. Methionine 301 lines the substrate pocket.

The protein belongs to the alanine racemase family. Requires pyridoxal 5'-phosphate as cofactor.

The catalysed reaction is L-alanine = D-alanine. In terms of biological role, isomerizes L-alanine to D-alanine which is then oxidized to pyruvate by DadA. The chain is Alanine racemase, catabolic (dadB) from Klebsiella aerogenes (Enterobacter aerogenes).